The sequence spans 366 residues: Proline-rich protein 19 (366 aa).

Disordered stretches follow at residues 1–53 (MDPR…RDPC), 102–149 (ESHT…DLPV), 256–286 (TPAHRGSQVQPPGHQLPFLSSASSPSGAAWG), and 301–338 (ATPPPPPPQPWDVRPPQPLPQPPSPLLPRTSALDWSPN). Positions 18–29 (GRIRRRKTRRER) are enriched in basic residues. Composition is skewed to polar residues over residues 104–113 (HTPQLPTKPS) and 256–265 (TPAHRGSQVQ). The segment covering 275 to 286 (SSASSPSGAAWG) has biased composition (low complexity). Pro residues predominate over residues 302 to 326 (TPPPPPPQPWDVRPPQPLPQPPSPL).

Interacts with CNTD1. In terms of tissue distribution, preferentially expressed in gonads.

The protein localises to the nucleus. Its subcellular location is the chromosome. Its function is as follows. Promotes meiotic crossing over formation through its interaction with CNTD1 by participating in the crossover differentiation step of crossover-specific recombination intermediates. The polypeptide is Proline-rich protein 19 (Mus musculus (Mouse)).